The sequence spans 189 residues: Protein GrpE (189 aa).

Residues 1-31 (MSKKHMKGNGGEVPENSEMSGSEELVAVEPG) are disordered.

It belongs to the GrpE family. Homodimer.

The protein localises to the cytoplasm. Functionally, participates actively in the response to hyperosmotic and heat shock by preventing the aggregation of stress-denatured proteins, in association with DnaK and GrpE. It is the nucleotide exchange factor for DnaK and may function as a thermosensor. Unfolded proteins bind initially to DnaJ; upon interaction with the DnaJ-bound protein, DnaK hydrolyzes its bound ATP, resulting in the formation of a stable complex. GrpE releases ADP from DnaK; ATP binding to DnaK triggers the release of the substrate protein, thus completing the reaction cycle. Several rounds of ATP-dependent interactions between DnaJ, DnaK and GrpE are required for fully efficient folding. This chain is Protein GrpE, found in Syntrophobacter fumaroxidans (strain DSM 10017 / MPOB).